Reading from the N-terminus, the 762-residue chain is Primary amine oxidase, liver isozyme (762 aa).

A signal peptide spans 1 to 16 (MFIFIFLSLWTLLVMG). The interval 23–54 (GSEEGVGKQCHPSLPPRCPSRSPSDQPWTHPD) is disordered. The N-linked (GlcNAc...) asparagine glycan is linked to Asn-136. The cysteines at positions 197 and 198 are disulfide-linked. N-linked (GlcNAc...) asparagine glycosylation occurs at Asn-231. 383–393 (YMDSGFGMGYF) is a substrate binding site. Residue Asp-385 is the Proton acceptor of the active site. Cys-403 and Cys-429 are disulfide-bonded. Residue 467–472 (MLNYDY) coordinates substrate. Tyr-470 acts as the Schiff-base intermediate with substrate; via topaquinone in catalysis. Tyr-470 carries the 2',4',5'-topaquinone modification. Residues His-519 and His-521 each contribute to the Cu cation site. Asp-528, Leu-529, Asp-530, Glu-571, Phe-662, and Asn-664 together coordinate Ca(2+). A glycan (N-linked (GlcNAc...) asparagine) is linked at Asn-665. Ca(2+) contacts are provided by Glu-666, Asp-672, and Leu-673. His-683 lines the Cu cation pocket. A disulfide bridge links Cys-733 with Cys-740.

Belongs to the copper/topaquinone oxidase family. Homodimer; disulfide-linked. Requires Cu cation as cofactor. The cofactor is Ca(2+). L-topaquinone serves as cofactor. In terms of processing, topaquinone (TPQ) is generated by copper-dependent autoxidation of a specific tyrosyl residue. In terms of tissue distribution, liver.

Its subcellular location is the secreted. It is found in the extracellular space. It catalyses the reaction a primary methyl amine + O2 + H2O = an aldehyde + H2O2 + NH4(+). The sequence is that of Primary amine oxidase, liver isozyme from Bos taurus (Bovine).